An 813-amino-acid polypeptide reads, in one-letter code: ATP-dependent zinc metalloprotease FTSH 10, mitochondrial (813 aa).

The transit peptide at 1–86 (MIFSKLGSSL…FANPRLRRFF (86 aa)) directs the protein to the mitochondrion. The disordered stretch occupies residues 93–129 (KKNYENYYPKDSKKAPKNEQKSESRDGSKKNENENAG). Basic and acidic residues predominate over residues 94–125 (KNYENYYPKDSKKAPKNEQKSESRDGSKKNEN). Residues 139 to 157 (MLIPLMAIALILSTFSLGS) traverse the membrane as a helical segment. 367–374 (GPPGTGKT) is a binding site for ATP. Histidine 592 is a binding site for Zn(2+). Glutamate 593 is a catalytic residue. The Zn(2+) site is built by histidine 596 and aspartate 668. Basic and acidic residues predominate over residues 764-790 (RPFKSGETTNYDRFKSGFEESEKESQK). The segment at 764 to 813 (RPFKSGETTNYDRFKSGFEESEKESQKESVPVKPVEDDGIPPLEPQVVPT) is disordered.

This sequence in the N-terminal section; belongs to the AAA ATPase family. It in the C-terminal section; belongs to the peptidase M41 family. Requires Zn(2+) as cofactor.

Its subcellular location is the mitochondrion inner membrane. In terms of biological role, probable ATP-dependent zinc metallopeptidase. Involved in the assembly and/or stability of the complexes I and V of the mitochondrial oxidative phosphorylation system. The chain is ATP-dependent zinc metalloprotease FTSH 10, mitochondrial (FTSH10) from Arabidopsis thaliana (Mouse-ear cress).